A 208-amino-acid chain; its full sequence is FMN-dependent NADH:quinone oxidoreductase (208 aa).

FMN contacts are provided by residues 17–19 (SNS), 99–102 (MWNL), and 143–146 (SRGG).

Belongs to the azoreductase type 1 family. In terms of assembly, homodimer. FMN is required as a cofactor.

It carries out the reaction 2 a quinone + NADH + H(+) = 2 a 1,4-benzosemiquinone + NAD(+). The enzyme catalyses N,N-dimethyl-1,4-phenylenediamine + anthranilate + 2 NAD(+) = 2-(4-dimethylaminophenyl)diazenylbenzoate + 2 NADH + 2 H(+). Its function is as follows. Quinone reductase that provides resistance to thiol-specific stress caused by electrophilic quinones. Also exhibits azoreductase activity. Catalyzes the reductive cleavage of the azo bond in aromatic azo compounds to the corresponding amines. This chain is FMN-dependent NADH:quinone oxidoreductase, found in Staphylococcus aureus (strain COL).